The chain runs to 177 residues: O-acetyl-ADP-ribose deacetylase (177 aa).

Residues 1-175 (MKTRIHVVQG…LYERLLTQQG (175 aa)) form the Macro domain. Substrate-binding positions include 11 to 12 (DI), Asn25, 33 to 35 (GVD), and 122 to 126 (STGVY). Asp35 serves as the catalytic Proton acceptor.

This sequence belongs to the MacroD-type family. YmdB subfamily. In terms of assembly, homodimer. Interacts with RNase III.

It carries out the reaction 3''-O-acetyl-ADP-D-ribose + H2O = ADP-D-ribose + acetate + H(+). The catalysed reaction is 2''-O-acetyl-ADP-D-ribose + H2O = ADP-D-ribose + acetate + H(+). In terms of biological role, deacetylates O-acetyl-ADP ribose to yield ADP-ribose and free acetate. Down-regulates ribonuclease 3 (RNase III) activity. Acts by interacting directly with the region of the ribonuclease that is required for dimerization/activation. The protein is O-acetyl-ADP-ribose deacetylase of Escherichia coli O157:H7.